The following is a 920-amino-acid chain: Protein translocase subunit SecA 2 (920 aa).

ATP-binding positions include Gln-91, 109 to 113, and Asp-527; that span reads GEGKT. Basic and acidic residues predominate over residues 859-870; it reads GEGSALDRRPTD. Positions 859–920 are disordered; the sequence is GEGSALDRRP…KSRNRRRRKR (62 aa). Residues 906–920 are compositionally biased toward basic residues; the sequence is PHRPGKSRNRRRRKR.

It belongs to the SecA family. Monomer and homodimer. Part of the essential Sec protein translocation apparatus which comprises SecA, SecYEG and auxiliary proteins SecDF. Other proteins may also be involved.

The protein localises to the cell membrane. The protein resides in the cytoplasm. It catalyses the reaction ATP + H2O + cellular proteinSide 1 = ADP + phosphate + cellular proteinSide 2.. In terms of biological role, part of the Sec protein translocase complex. Interacts with the SecYEG preprotein conducting channel. Has a central role in coupling the hydrolysis of ATP to the transfer of proteins into and across the cell membrane, serving as an ATP-driven molecular motor driving the stepwise translocation of polypeptide chains across the membrane. This chain is Protein translocase subunit SecA 2, found in Streptomyces avermitilis (strain ATCC 31267 / DSM 46492 / JCM 5070 / NBRC 14893 / NCIMB 12804 / NRRL 8165 / MA-4680).